Here is a 172-residue protein sequence, read N- to C-terminus: RNA pyrophosphohydrolase (172 aa).

In terms of domain architecture, Nudix hydrolase spans glycine 6–lysine 149. The Nudix box signature appears at glycine 38–glycine 59.

It belongs to the Nudix hydrolase family. RppH subfamily. The cofactor is a divalent metal cation.

Accelerates the degradation of transcripts by removing pyrophosphate from the 5'-end of triphosphorylated RNA, leading to a more labile monophosphorylated state that can stimulate subsequent ribonuclease cleavage. The protein is RNA pyrophosphohydrolase of Shewanella sediminis (strain HAW-EB3).